A 456-amino-acid chain; its full sequence is tRNA-2-methylthio-N(6)-dimethylallyladenosine synthase (456 aa).

One can recognise an MTTase N-terminal domain in the interval 2-119; the sequence is KKVFIKTYGC…LPDLIAARRR (118 aa). Cysteine 11, cysteine 48, cysteine 82, cysteine 156, cysteine 160, and cysteine 163 together coordinate [4Fe-4S] cluster. A Radical SAM core domain is found at 142-375; the sequence is RVDGASAYVS…QATIEENVAR (234 aa). The TRAM domain maps to 378–448; the sequence is QGMVGSVQRI…PHSLRGEVAE (71 aa).

This sequence belongs to the methylthiotransferase family. MiaB subfamily. In terms of assembly, monomer. [4Fe-4S] cluster serves as cofactor.

The protein resides in the cytoplasm. It catalyses the reaction N(6)-dimethylallyladenosine(37) in tRNA + (sulfur carrier)-SH + AH2 + 2 S-adenosyl-L-methionine = 2-methylsulfanyl-N(6)-dimethylallyladenosine(37) in tRNA + (sulfur carrier)-H + 5'-deoxyadenosine + L-methionine + A + S-adenosyl-L-homocysteine + 2 H(+). Catalyzes the methylthiolation of N6-(dimethylallyl)adenosine (i(6)A), leading to the formation of 2-methylthio-N6-(dimethylallyl)adenosine (ms(2)i(6)A) at position 37 in tRNAs that read codons beginning with uridine. This chain is tRNA-2-methylthio-N(6)-dimethylallyladenosine synthase, found in Ralstonia pickettii (strain 12J).